The sequence spans 209 residues: Ribonuclease HII (209 aa).

The RNase H type-2 domain occupies 20–209 (GLVAGVDEAG…VARSLPGACR (190 aa)). A divalent metal cation contacts are provided by aspartate 26, glutamate 27, and aspartate 118.

It belongs to the RNase HII family. Requires Mn(2+) as cofactor. Mg(2+) serves as cofactor.

The protein resides in the cytoplasm. It carries out the reaction Endonucleolytic cleavage to 5'-phosphomonoester.. In terms of biological role, endonuclease that specifically degrades the RNA of RNA-DNA hybrids. The sequence is that of Ribonuclease HII from Verminephrobacter eiseniae (strain EF01-2).